The chain runs to 317 residues: Lipase 1 (317 aa).

The N-terminal stretch at 1–18 (MLLKRLCFAALFSLSMVG) is a signal peptide. C19 carries N-palmitoyl cysteine lipidation. Residue C19 is the site of S-diacylglycerol cysteine attachment. Residues 69-296 (PLLLIHGFGG…MEDVGHVPMV (228 aa)) enclose the AB hydrolase-1 domain. Residue H74 is part of the active site. S142 acts as the Nucleophile in catalysis. Active-site charge relay system residues include E270 and H292.

It is found in the cell outer membrane. The catalysed reaction is a triacylglycerol + H2O = a diacylglycerol + a fatty acid + H(+). The protein is Lipase 1 (lip1) of Psychrobacter immobilis.